A 77-amino-acid polypeptide reads, in one-letter code: Acyl carrier protein homolog (77 aa).

Positions 1–76 (MSINIKDLIM…DLINAFEDVL (76 aa)) constitute a Carrier domain. Serine 36 is modified (O-(pantetheine 4'-phosphoryl)serine).

In terms of processing, 4'-phosphopantetheine is transferred from CoA to a specific serine of the apo-ACP-like protein.

The protein operates within lipid metabolism; fatty acid biosynthesis. Functionally, carrier of the growing fatty acid chain in fatty acid biosynthesis. This is Acyl carrier protein homolog from Ureaplasma parvum serovar 3 (strain ATCC 700970).